Here is a 244-residue protein sequence, read N- to C-terminus: 1-(5-phosphoribosyl)-5-[(5-phosphoribosylamino)methylideneamino] imidazole-4-carboxamide isomerase (244 aa).

Asp10 (proton acceptor) is an active-site residue. The active-site Proton donor is the Asp132.

This sequence belongs to the HisA/HisF family.

The protein resides in the cytoplasm. It carries out the reaction 1-(5-phospho-beta-D-ribosyl)-5-[(5-phospho-beta-D-ribosylamino)methylideneamino]imidazole-4-carboxamide = 5-[(5-phospho-1-deoxy-D-ribulos-1-ylimino)methylamino]-1-(5-phospho-beta-D-ribosyl)imidazole-4-carboxamide. It functions in the pathway amino-acid biosynthesis; L-histidine biosynthesis; L-histidine from 5-phospho-alpha-D-ribose 1-diphosphate: step 4/9. This Xanthomonas euvesicatoria pv. vesicatoria (strain 85-10) (Xanthomonas campestris pv. vesicatoria) protein is 1-(5-phosphoribosyl)-5-[(5-phosphoribosylamino)methylideneamino] imidazole-4-carboxamide isomerase.